The primary structure comprises 98 residues: Integration host factor subunit beta (98 aa).

This sequence belongs to the bacterial histone-like protein family. As to quaternary structure, heterodimer of an alpha and a beta chain.

In terms of biological role, this protein is one of the two subunits of integration host factor, a specific DNA-binding protein that functions in genetic recombination as well as in transcriptional and translational control. The protein is Integration host factor subunit beta of Teredinibacter turnerae (strain ATCC 39867 / T7901).